Consider the following 92-residue polypeptide: uncharacterized protein (92 aa).

The next 3 membrane-spanning stretches (helical) occupy residues 1–21 (MNIY…LVGL), 30–50 (ANVL…IVVI), and 62–82 (IALA…KVIG).

The protein to M.thermoautotrophicum MTH1250.

It localises to the cell membrane. This is an uncharacterized protein from Methanocaldococcus jannaschii (strain ATCC 43067 / DSM 2661 / JAL-1 / JCM 10045 / NBRC 100440) (Methanococcus jannaschii).